A 308-amino-acid chain; its full sequence is tRNA pseudouridine synthase B (308 aa).

The active-site Nucleophile is the aspartate 49.

Belongs to the pseudouridine synthase TruB family. Type 1 subfamily.

It catalyses the reaction uridine(55) in tRNA = pseudouridine(55) in tRNA. In terms of biological role, responsible for synthesis of pseudouridine from uracil-55 in the psi GC loop of transfer RNAs. This chain is tRNA pseudouridine synthase B, found in Corynebacterium jeikeium (strain K411).